Reading from the N-terminus, the 298-residue chain is Junctional adhesion molecule B (298 aa).

The N-terminal stretch at M1–G28 is a signal peptide. Topologically, residues F29–N236 are extracellular. The Ig-like V-type domain maps to S32–M128. 2 disulfide bridges follow: C51-C110 and C156-C214. An N-linked (GlcNAc...) asparagine glycan is attached at N99. Residues P135–S238 enclose the Ig-like C2-type domain. The chain crosses the membrane as a helical span at residues I237–G257. The Cytoplasmic portion of the chain corresponds to T258–I298.

Belongs to the immunoglobulin superfamily. In terms of processing, the expression in Sertoli cells is regulated by TGFB3 through ubiquitin-mediated proteasomal degradation. In terms of tissue distribution, expressed by bone marrow stromal cells (at protein level). Expressed in skin (at protein level). Expressed in testis by Sertoli cells (at protein level). Expressed by dorsal root ganglion and spinal cord neurons.

It localises to the cell membrane. The protein resides in the cell junction. The protein localises to the tight junction. Its function is as follows. Junctional adhesion protein that mediates heterotypic cell-cell interactions with its cognate receptor JAM3 to regulate different cellular processes. Plays a role in homing and mobilization of hematopoietic stem and progenitor cells within the bone marrow. At the surface of bone marrow stromal cells, it contributes to the retention of the hematopoietic stem and progenitor cells expressing JAM3. Plays a central role in leukocytes extravasation by facilitating not only transmigration but also tethering and rolling of leukocytes along the endothelium. Tethering and rolling of leukocytes are dependent on the binding by JAM2 of the integrin alpha-4/beta-1. Plays a role in spermatogenesis where JAM2 and JAM3, which are respectively expressed by Sertoli and germ cells, mediate an interaction between both cell types and play an essential role in the anchorage of germ cells onto Sertoli cells and the assembly of cell polarity complexes during spermatid differentiation. Also functions as an inhibitory somatodendritic cue that prevents the myelination of non-axonal parts of neurons. During myogenesis, it is involved in myocyte fusion. May also play a role in angiogenesis. In Mus musculus (Mouse), this protein is Junctional adhesion molecule B.